A 737-amino-acid polypeptide reads, in one-letter code: Cellulose synthase-like protein E1 (737 aa).

A run of 2 helical transmembrane segments spans residues 26–45 (AVYR…VLYY) and 58–78 (AAWL…VIAQ). Residues aspartate 146 and aspartate 451 contribute to the active site. 5 helical membrane passes run 528–548 (LWAA…LGLV), 551–571 (TPLF…VFCV), 654–674 (VIIA…LSQI), 683–703 (WNVF…NMPI), and 716–736 (IPTA…LVPI).

The protein belongs to the glycosyltransferase 2 family. Plant cellulose synthase-like E subfamily.

It localises to the golgi apparatus membrane. Thought to be a Golgi-localized beta-glycan synthase that polymerize the backbones of noncellulosic polysaccharides (hemicelluloses) of plant cell wall. In Oryza sativa subsp. japonica (Rice), this protein is Cellulose synthase-like protein E1 (CSLE1).